Here is a 337-residue protein sequence, read N- to C-terminus: Glyceraldehyde-3-phosphate dehydrogenase, cytosolic (337 aa).

The segment at Met-1 to Asn-151 is binding to NAD. NAD(+)-binding positions include Arg-13–Ile-14, Asp-35, and Arg-82. Residues Ala-152–Gln-337 are catalytic. Residues Ser-153–Thr-155, Thr-184, Thr-213–Gly-214, and Arg-236 each bind D-glyceraldehyde 3-phosphate. The active-site Nucleophile is Cys-154. NAD(+) is bound at residue Asn-318.

It belongs to the glyceraldehyde-3-phosphate dehydrogenase family. As to quaternary structure, homotetramer.

The protein localises to the cytoplasm. The enzyme catalyses D-glyceraldehyde 3-phosphate + phosphate + NAD(+) = (2R)-3-phospho-glyceroyl phosphate + NADH + H(+). The protein operates within carbohydrate degradation; glycolysis; pyruvate from D-glyceraldehyde 3-phosphate: step 1/5. Key enzyme in glycolysis that catalyzes the first step of the pathway by converting D-glyceraldehyde 3-phosphate (G3P) into 3-phospho-D-glyceroyl phosphate. Essential for the maintenance of cellular ATP levels and carbohydrate metabolism. The sequence is that of Glyceraldehyde-3-phosphate dehydrogenase, cytosolic (GAPC) from Mesembryanthemum crystallinum (Common ice plant).